The chain runs to 172 residues: Adenine phosphoribosyltransferase (172 aa).

It belongs to the purine/pyrimidine phosphoribosyltransferase family. As to quaternary structure, homodimer.

It localises to the cytoplasm. The catalysed reaction is AMP + diphosphate = 5-phospho-alpha-D-ribose 1-diphosphate + adenine. It participates in purine metabolism; AMP biosynthesis via salvage pathway; AMP from adenine: step 1/1. Its function is as follows. Catalyzes a salvage reaction resulting in the formation of AMP, that is energically less costly than de novo synthesis. The chain is Adenine phosphoribosyltransferase from Levilactobacillus brevis (strain ATCC 367 / BCRC 12310 / CIP 105137 / JCM 1170 / LMG 11437 / NCIMB 947 / NCTC 947) (Lactobacillus brevis).